A 29-amino-acid polypeptide reads, in one-letter code: Cytochrome b6-f complex subunit 8 (29 aa).

The chain crosses the membrane as a helical span at residues 3 to 23 (MVSLAWAALMVVFTFSLSLVV).

Belongs to the PetN family. In terms of assembly, the 4 large subunits of the cytochrome b6-f complex are cytochrome b6, subunit IV (17 kDa polypeptide, PetD), cytochrome f and the Rieske protein, while the 4 small subunits are PetG, PetL, PetM and PetN. The complex functions as a dimer.

It is found in the plastid. The protein resides in the chloroplast thylakoid membrane. Its function is as follows. Component of the cytochrome b6-f complex, which mediates electron transfer between photosystem II (PSII) and photosystem I (PSI), cyclic electron flow around PSI, and state transitions. The polypeptide is Cytochrome b6-f complex subunit 8 (Cucumis sativus (Cucumber)).